Reading from the N-terminus, the 51-residue chain is Basic phospholipase A2 Bfon11 (51 aa).

The Ca(2+) site is built by Tyr27, Gly29, and Gly31. Residues Cys28 and Cys43 are joined by a disulfide bond. Residue His46 is part of the active site. Residue Asp47 participates in Ca(2+) binding.

This sequence belongs to the phospholipase A2 family. Group II subfamily. D49 sub-subfamily. Ca(2+) is required as a cofactor. In terms of tissue distribution, expressed by the venom gland.

Its subcellular location is the secreted. It catalyses the reaction a 1,2-diacyl-sn-glycero-3-phosphocholine + H2O = a 1-acyl-sn-glycero-3-phosphocholine + a fatty acid + H(+). Snake venom phospholipase A2 (PLA2) that impairs hemostasis. PLA2 catalyzes the calcium-dependent hydrolysis of the 2-acyl groups in 3-sn-phosphoglycerides. This Bothrops fonsecai (Fonseca's lancehead) protein is Basic phospholipase A2 Bfon11.